Reading from the N-terminus, the 556-residue chain is Oxygen-dependent choline dehydrogenase (556 aa).

6 to 35 (DYIIIGAGSAGNVLAARLTEDPGVTVLLLE) is a binding site for FAD. The active-site Proton acceptor is His475.

This sequence belongs to the GMC oxidoreductase family. Requires FAD as cofactor.

It catalyses the reaction choline + A = betaine aldehyde + AH2. The enzyme catalyses betaine aldehyde + NAD(+) + H2O = glycine betaine + NADH + 2 H(+). Its pathway is amine and polyamine biosynthesis; betaine biosynthesis via choline pathway; betaine aldehyde from choline (cytochrome c reductase route): step 1/1. In terms of biological role, involved in the biosynthesis of the osmoprotectant glycine betaine. Catalyzes the oxidation of choline to betaine aldehyde and betaine aldehyde to glycine betaine at the same rate. In Xanthomonas euvesicatoria pv. vesicatoria (strain 85-10) (Xanthomonas campestris pv. vesicatoria), this protein is Oxygen-dependent choline dehydrogenase.